The primary structure comprises 128 residues: Small ribosomal subunit protein uS9 (128 aa).

This sequence belongs to the universal ribosomal protein uS9 family.

The chain is Small ribosomal subunit protein uS9 from Amoebophilus asiaticus (strain 5a2).